Here is a 337-residue protein sequence, read N- to C-terminus: Phosphate acyltransferase (337 aa).

This sequence belongs to the PlsX family. In terms of assembly, homodimer. Probably interacts with PlsY.

It is found in the cytoplasm. It catalyses the reaction a fatty acyl-[ACP] + phosphate = an acyl phosphate + holo-[ACP]. The protein operates within lipid metabolism; phospholipid metabolism. Its function is as follows. Catalyzes the reversible formation of acyl-phosphate (acyl-PO(4)) from acyl-[acyl-carrier-protein] (acyl-ACP). This enzyme utilizes acyl-ACP as fatty acyl donor, but not acyl-CoA. In Aquifex aeolicus (strain VF5), this protein is Phosphate acyltransferase.